Reading from the N-terminus, the 334-residue chain is Probable tRNA pseudouridine synthase B (334 aa).

D82 serves as the catalytic Nucleophile. Residues 250–325 enclose the PUA domain; that stretch reads LPKVWIRDSA…IAVDVDKVFM (76 aa).

It belongs to the pseudouridine synthase TruB family. Type 2 subfamily.

The enzyme catalyses uridine(55) in tRNA = pseudouridine(55) in tRNA. In terms of biological role, could be responsible for synthesis of pseudouridine from uracil-55 in the psi GC loop of transfer RNAs. The chain is Probable tRNA pseudouridine synthase B from Thermococcus gammatolerans (strain DSM 15229 / JCM 11827 / EJ3).